Consider the following 1588-residue polypeptide: Multicopy suppressor of chk1 protein 1 (1588 aa).

Residues 38–60 (HAKPSTQQQQQQQNISNETTSTG) are disordered. Positions 51 to 60 (NISNETTSTG) are enriched in polar residues. The JmjN domain maps to 82 to 124 (NVRVTPKKEEFSRGLDFISDLYDQTARKSGAVRVIPPDNWKCP). The PHD-type 1 zinc-finger motif lies at 298-345 (KCKLCAQEGSSLVTCCICQSNYHYACVEAPFAPFSDIHYWTCNSCIPS). A compositionally biased stretch (polar residues) spans 385 to 395 (PLTLPSNTKTP). Residues 385–412 (PLTLPSNTKTPPASARQSSRRTRSTSGK) are disordered. Positions 475 to 645 (FPTSRQNAYY…DMHAENSFNM (171 aa)) constitute a JmjC domain. The segment at 848 to 872 (EKRKPKRGSATHSHLESPSEEVEDL) is disordered. The PHD-type 2 zinc-finger motif lies at 1171 to 1220 (FHYCFCRQPEAGMMIECELCHEWYHAKCMKMSKKKLRADEKFICPICDYR). The tract at residues 1319–1341 (APQPPPFIGESRSNRKPRPTKRQ) is disordered. Residues 1454 to 1505 (SVICLCRQPFAISDGTVQCHNCLEWFHYECVGLSSDIVSTLSNYACPDCCSK) form a PHD-type 3 zinc finger.

The protein localises to the nucleus. Its function is as follows. Has a role in regulating chromatin structure via global deacetylation of histone H3. This function is associated with the activity of a histone deacetylase. The protein is Multicopy suppressor of chk1 protein 1 (msc1) of Schizosaccharomyces pombe (strain 972 / ATCC 24843) (Fission yeast).